The sequence spans 1079 residues: MVCSAAPLLLLATTLPLLGSPVAQASQPVSETGVRPREGLQRRQWGPLIGRDKAWNERIDRPFPACPIPLSSSFGRWPKGQTMWAQTSTLTLTEEELGQSQAGGESGSGQLLDQENGAGESALVSVYVHLDFPDKTWPPELSRTLTLPAASASSSPRPLLTGLRLTTECNVNHKGNFYCACLSGYQWNTSICLHYPPCQSLHNHQPCGCLVFSHPEPGYCQLLPPGSPVTCLPAVPGILNLNSQLQMPGDTLSLTLHLSQEATNLSWFLRHPGSPSPILLQPGTQVSVTSSHGQAALSVSNMSHHWAGEYMSCFEAQGFKWNLYEVVRVPLKATDVARLPYQLSISCATSPGFQLSCCIPSTNLAYTAAWSPGEGSKASSFNESGSQCFVLAVQRCPMADTTYACDLQSLGLAPLRVPISITIIQDGDITCPEDASVLTWNVTKAGHVAQAPCPESKRGIVRRLCGADGVWGPVHSSCTDARLLALFTRTKLLQAGQGSPAEEVPQILAQLPGQAAEASSPSDLLTLLSTMKYVAKVVAEARIQLDRRALKNLLIATDKVLDMDTRSLWTLAQARKPWAGSTLLLAVETLACSLCPQDHPFAFSLPNVLLQSQLFGPTFPADYSISFPTRPPLQAQIPRHSLAPLVRNGTEISITSLVLRKLDHLLPSNYGQGLGDSLYATPGLVLVISIMAGDRAFSQGEVIMDFGNTDGSPHCVFWDHSLFQGRGGWSKEGCQAQVASASPTAQCLCQHLTAFSVLMSPHTVPEEPALALLTQVGLGASILALLVCLGVYWLVWRVVVRNKISYFRHAALLNMVFCLLAADTCFLGAPFLSPGPRSPLCLAAAFLCHFLYLATFFWMLAQALVLAHQLLFVFHQLAKHRVLPLMVLLGYLCPLGLAGVTLGLYLPQGQYLREGECWLDGKGGALYTFVGPVLAIIGVNGLVLAMAMLKLLRPSLSEGPPAEKRQALLGVIKALLILTPIFGLTWGLGLATLLEEVSTVPHYIFTILNTLQGVFILLFGCLMDRKIQEALRKRFCRAQAPSSTISLVSCCLQILSCASKSMSEGIPWPSSEDMGTARS.

The first 25 residues, 1 to 25 (MVCSAAPLLLLATTLPLLGSPVAQA), serve as a signal peptide directing secretion. At 26–775 (SQPVSETGVR…EEPALALLTQ (750 aa)) the chain is on the extracellular side. N-linked (GlcNAc...) asparagine glycans are attached at residues asparagine 188, asparagine 264, asparagine 301, asparagine 382, asparagine 441, and asparagine 648. The region spanning 599-765 (HPFAFSLPNV…SVLMSPHTVP (167 aa)) is the GAIN-B domain. 2 disulfide bridges follow: cysteine 715/cysteine 747 and cysteine 734/cysteine 749. The interval 715 to 765 (CVFWDHSLFQGRGGWSKEGCQAQVASASPTAQCLCQHLTAFSVLMSPHTVP) is GPS. Residues 776–796 (VGLGASILALLVCLGVYWLVW) form a helical membrane-spanning segment. Residues 797 to 811 (RVVVRNKISYFRHAA) lie on the Cytoplasmic side of the membrane. The helical transmembrane segment at 812-832 (LLNMVFCLLAADTCFLGAPFL) threads the bilayer. Residues 833 to 851 (SPGPRSPLCLAAAFLCHFL) lie on the Extracellular side of the membrane. The helical transmembrane segment at 852–874 (YLATFFWMLAQALVLAHQLLFVF) threads the bilayer. At 875–881 (HQLAKHR) the chain is on the cytoplasmic side. A helical membrane pass occupies residues 882–902 (VLPLMVLLGYLCPLGLAGVTL). Residues 903–928 (GLYLPQGQYLREGECWLDGKGGALYT) are Extracellular-facing. Residues 929-949 (FVGPVLAIIGVNGLVLAMAML) form a helical membrane-spanning segment. Residues 950 to 973 (KLLRPSLSEGPPAEKRQALLGVIK) are Cytoplasmic-facing. The helical transmembrane segment at 974-994 (ALLILTPIFGLTWGLGLATLL) threads the bilayer. Over 995-1002 (EEVSTVPH) the chain is Extracellular. The helical transmembrane segment at 1003–1023 (YIFTILNTLQGVFILLFGCLM) threads the bilayer. Residues 1024–1079 (DRKIQEALRKRFCRAQAPSSTISLVSCCLQILSCASKSMSEGIPWPSSEDMGTARS) are Cytoplasmic-facing.

The protein belongs to the G-protein coupled receptor 2 family. Adhesion G-protein coupled receptor (ADGR) subfamily. Heterodimer of 2 chains generated by proteolytic processing; the large extracellular N-terminal fragment and the membrane-bound C-terminal fragment predominantly remain associated and non-covalently linked. Autoproteolytically processed at the GPS region of the GAIN-B domain; this cleavage modulates receptor activity.

The protein resides in the membrane. In terms of biological role, orphan receptor. The protein is Adhesion G-protein coupled receptor F3 (ADGRF3) of Homo sapiens (Human).